Reading from the N-terminus, the 523-residue chain is L-tyrosine:2-oxoglutarate aminotransferase ucdG (523 aa).

The protein belongs to the class-I pyridoxal-phosphate-dependent aminotransferase family. Homodimer. The cofactor is pyridoxal 5'-phosphate.

The protein localises to the cytoplasm. The catalysed reaction is L-tyrosine + 2-oxoglutarate = 3-(4-hydroxyphenyl)pyruvate + L-glutamate. The protein operates within secondary metabolite biosynthesis. Functionally, nonribosomal peptide synthetase that mediates the biosynthesis of usterphenyllins and uscandidusins, p-terphenyl derivatives. Within the pathway, ucdG is probably involved in the conversion of L-tyrosine into 4-hydroxyphenylpyruvate (HPPA) as a precursor for the usterphenyllin and uscandidusin biosynthesis. UcdE further prenylates position C-14 of ring C of usterphenyllin B to form usterphenyllin A. The pathway begin with the biosynthesis of 4-hydroxyphenylpyruvate (HPPA) from L-tyrosine, possibly by the aminotransferase ucdG. The nonribosomal peptide synthetase ucdA then condenses two HPPA units to produce atromentin. The key step in this pathway is the reduction and dehydration of atromentin to form a terphenyl triol intermediate, performed by the NAD-dependent dehydrogenase ucdB. Further O-methylation by the methyltransferase ucdC forms terphenyllin carrying two methoxy moieties at C-9 and C-12, and subsequent dihydroxylation at C-3 of ring A and C-15 of ring C by the flavin-dependent oxygenase ucdD leads to 3,15-dihydroxyterphenyllin. Prenylation by ucdE at position C-5 of ring A forms usterphenyllin B, and is followed by a second prenylation at position C-14 of ring C to form usterphenyllin A. The following furan ring formation that leads to uscandidusins A and B was proven to be an unexpected spontaneous non-enzymatic reaction. This chain is L-tyrosine:2-oxoglutarate aminotransferase ucdG, found in Aspergillus ustus.